The following is a 150-amino-acid chain: CGGCEAGSAGKDAFHLRVRVHPFHVLRINKMLSCAGADRLQTGMRGAFGKPQGVCARVAIGQVLLSVRCKDGNANHAQEALRRAKFKFPRRQKIIVSRKWGFTKFSRTDYLKYKSENRIVPDGVNAKLLGCHGRLAARQPGRAFLEAVGN.

The protein belongs to the universal ribosomal protein uL16 family. In terms of assembly, component of the small ribosomal subunit. Mature ribosomes consist of a small (40S) and a large (60S) subunit. The 40S subunit contains about 33 different proteins and 1 molecule of RNA (18S). The 60S subunit contains about 49 different proteins and 3 molecules of RNA (25S, 5.8S and 5S).

This is Large ribosomal subunit protein uL16 (RPL10) from Nicotiana tabacum (Common tobacco).